The sequence spans 72 residues: MNNSMISPSVVDLKAKTGDRYSLVVITSKRARQIIAGEEPLVDIESNKALTIAINEVDQDKIKFDLPIEGIN.

This sequence belongs to the RNA polymerase subunit omega family. The RNAP catalytic core consists of 2 alpha, 1 beta, 1 beta' and 1 omega subunit. When a sigma factor is associated with the core the holoenzyme is formed, which can initiate transcription.

It carries out the reaction RNA(n) + a ribonucleoside 5'-triphosphate = RNA(n+1) + diphosphate. Its function is as follows. Promotes RNA polymerase assembly. Latches the N- and C-terminal regions of the beta' subunit thereby facilitating its interaction with the beta and alpha subunits. The sequence is that of DNA-directed RNA polymerase subunit omega from Clostridium acetobutylicum (strain ATCC 824 / DSM 792 / JCM 1419 / IAM 19013 / LMG 5710 / NBRC 13948 / NRRL B-527 / VKM B-1787 / 2291 / W).